Here is a 179-residue protein sequence, read N- to C-terminus: Inner membrane-spanning protein YciB (179 aa).

A run of 5 helical transmembrane segments spans residues 22–42, 50–70, 76–96, 121–141, and 149–169; these read IYAATTALIVATAIVLIYSWV, MALITFVLVVVFGGLTLFFHN, WKVTVIYALFAGALLVSQWVM, LAWAVFFILCGLANIYIAFWL, and FKVFGLTALTLIFTLLSGIYI.

Belongs to the YciB family.

The protein resides in the cell inner membrane. In terms of biological role, plays a role in cell envelope biogenesis, maintenance of cell envelope integrity and membrane homeostasis. The protein is Inner membrane-spanning protein YciB of Shigella dysenteriae serotype 1 (strain Sd197).